A 104-amino-acid chain; its full sequence is Small ribosomal subunit protein uS10 (104 aa).

This sequence belongs to the universal ribosomal protein uS10 family. As to quaternary structure, part of the 30S ribosomal subunit.

Its function is as follows. Involved in the binding of tRNA to the ribosomes. This Gloeobacter violaceus (strain ATCC 29082 / PCC 7421) protein is Small ribosomal subunit protein uS10.